We begin with the raw amino-acid sequence, 323 residues long: Leucine-rich repeat-containing protein 46 (323 aa).

LRR repeat units lie at residues 49–70, 71–92, 93–114, and 115–135; these read ELET…EKLR, NIHS…ACIT, SLRF…LDLQ, and YLQF…DELP. The 43-residue stretch at 146–188 folds into the LRRCT domain; sequence NPCTNQEGYRKMVIGALPLLLDLDKQPILERWTSDEEDKSSDD. At Thr178 the chain carries Phosphothreonine. Phosphoserine is present on residues Ser179, Ser185, and Ser186. The stretch at 203–228 forms a coiled coil; it reads RGFFKDLEQELHQHQERRQQAALTEH. The interval 249-323 is disordered; that stretch reads MAGDCSSTAT…TKMTNKKSTK (75 aa). Residues 267-316 are compositionally biased toward low complexity; sequence PKATSSTQTASTTKKQVSKNQKSSVQARKGALAATTSKTSQAATPSMTKM. Ser303 carries the phosphoserine modification.

In terms of tissue distribution, testis-specific (at protein level).

It is found in the cell projection. The protein localises to the cilium. It localises to the flagellum. Required for normal spermatogenesis and male fertility. Plays an important role in sperm flagellum biogenesis. This is Leucine-rich repeat-containing protein 46 (Lrrc46) from Mus musculus (Mouse).